We begin with the raw amino-acid sequence, 146 residues long: MADPEKLFRVDVVTPNGMIYSHRGSIVDVRAIDGERSIMYNHVPLLTPLVISEVKVKRSREMDSRIDHIAISGGYIEFSNNVATIIADSAERARNIDISRAQAAKERAEKRLKEAREKHDERTLERAEVALRRAMNRISVYNTKGH.

This sequence belongs to the ATPase epsilon chain family. As to quaternary structure, F-type ATPases have 2 components, CF(1) - the catalytic core - and CF(0) - the membrane proton channel. CF(1) has five subunits: alpha(3), beta(3), gamma(1), delta(1), epsilon(1). CF(0) has three main subunits: a, b and c.

It localises to the cell membrane. Produces ATP from ADP in the presence of a proton gradient across the membrane. This is ATP synthase epsilon chain from Lactobacillus helveticus (strain DPC 4571).